Reading from the N-terminus, the 520-residue chain is GMP synthase [glutamine-hydrolyzing] (520 aa).

Residues 13–205 (KIIVLDYGSQ…ALNICKAKGD (193 aa)) enclose the Glutamine amidotransferase type-1 domain. Cys90 (nucleophile) is an active-site residue. Active-site residues include His179 and Glu181. The GMPS ATP-PPase domain maps to 206–395 (WSMDNFIDMQ…LGMPDHIVWR (190 aa)). Residue 233 to 239 (SGGVDSS) coordinates ATP.

As to quaternary structure, homodimer.

The catalysed reaction is XMP + L-glutamine + ATP + H2O = GMP + L-glutamate + AMP + diphosphate + 2 H(+). Its pathway is purine metabolism; GMP biosynthesis; GMP from XMP (L-Gln route): step 1/1. Catalyzes the synthesis of GMP from XMP. This Streptococcus pneumoniae (strain CGSP14) protein is GMP synthase [glutamine-hydrolyzing].